The following is a 708-amino-acid chain: Glutamate--tRNA ligase, cytoplasmic (708 aa).

2 interaction with ARC1 regions span residues 106–115 and 141–157; these read NLRTFILGGL and KVDVNVSRWYTLLEMDP. 205–207 is an L-glutamate binding site; sequence RFP. The 'HIGH' region signature appears at 210–219; it reads PSGYLHIGHA. H215 is an ATP binding site. D241 is an L-glutamate binding site. T300 is subject to Phosphothreonine. L-glutamate contacts are provided by residues 382–386 and R400; that span reads YDFCV. ATP contacts are provided by residues E403 and 437-441; that span reads LLSKR. The 'KMSKS' region signature appears at 437–441; the sequence is LLSKR.

The protein belongs to the class-I aminoacyl-tRNA synthetase family. Glutamate--tRNA ligase type 2 subfamily. As to quaternary structure, component of a yeast aminoacyl-tRNA synthase (aaRS) complex formed by methionyl-tRNA synthase MES1, glutamyl-tRNA synthase GUS1 and the tRNA aminoacylation cofactor ARC1 in a stoichiometric complex. Interacts (via N-ter) with ARC1 (via N-ter). Can also form a stable binary complex with ARC1 that is functional in terms of aminoacylation. ARC1 increases the affinity for cognate tRNAs due to the presence of a tRNA binding domain in the middle and C-terminal part of ARC1.

It localises to the cytoplasm. Its subcellular location is the mitochondrion. It carries out the reaction tRNA(Glu) + L-glutamate + ATP = L-glutamyl-tRNA(Glu) + AMP + diphosphate. Functionally, catalyzes the attachment of glutamate to tRNA(Glu) in a two-step reaction: glutamate is first activated by ATP to form Glu-AMP and then transferred to the acceptor end of tRNA(Glu). In mitochondria, constitutes the nondiscriminating glutamyl-tRNA synthase that generates the mitochondrial mischarged glutamyl-tRNA(Gln) substrate for the tRNA-dependent amidotransferase (AdT), which generates mitochondrial glutaminyl-tRNA(Gln) by transamidation of glutamyl-tRNA(Gln). The polypeptide is Glutamate--tRNA ligase, cytoplasmic (GUS1) (Saccharomyces cerevisiae (strain ATCC 204508 / S288c) (Baker's yeast)).